We begin with the raw amino-acid sequence, 226 residues long: MDWGALQTILGGVNKYSTSIGKIWLTVLFIFRIMILVVAAKEVWGDEQADFVCNTLQPGCKNVCYDHYFPISHIRLWALQLIFVSTPALLVAMHVAYRRHEKKRKFIKGEIKNEFKDIEEIKTQKVRIEGSLWWTYTSSIFFRVVFEAAFMYVFYVMYDGFSMQRLVKCNAWPCPNTVDCFVSRPTEKTVFTVFMIAVSGICILLNVTELCYLLIRYCSGKSKKPV.

An intramembrane segment occupies 2–13; sequence DWGALQTILGGV. At 14 to 20 the chain is on the cytoplasmic side; it reads NKYSTSI. Residues 21 to 40 form a helical membrane-spanning segment; that stretch reads GKIWLTVLFIFRIMILVVAA. Over 41–73 the chain is Extracellular; the sequence is KEVWGDEQADFVCNTLQPGCKNVCYDHYFPISH. Ca(2+) is bound by residues glutamate 42, glycine 45, and glutamate 47. 3 disulfide bridges follow: cysteine 53/cysteine 180, cysteine 60/cysteine 174, and cysteine 64/cysteine 169. Residues 74 to 94 traverse the membrane as a helical segment; the sequence is IRLWALQLIFVSTPALLVAMH. Residues 95 to 135 lie on the Cytoplasmic side of the membrane; sequence VAYRRHEKKRKFIKGEIKNEFKDIEEIKTQKVRIEGSLWWT. Residues 136 to 156 traverse the membrane as a helical segment; it reads YTSSIFFRVVFEAAFMYVFYV. Topologically, residues 157–189 are extracellular; that stretch reads MYDGFSMQRLVKCNAWPCPNTVDCFVSRPTEKT. Residues 190 to 210 traverse the membrane as a helical segment; the sequence is VFTVFMIAVSGICILLNVTEL. Residues 211-226 are Cytoplasmic-facing; the sequence is CYLLIRYCSGKSKKPV.

This sequence belongs to the connexin family. Beta-type (group I) subfamily. In terms of assembly, a hemichannel or connexon is composed of a hexamer of connexins. A functional gap junction is formed by the apposition of two hemichannels. Forms heteromeric channels with GJB4. Interacts with CNST.

It localises to the cell membrane. Its subcellular location is the cell junction. The protein resides in the gap junction. Functionally, structural component of gap junctions. Gap junctions are dodecameric channels that connect the cytoplasm of adjoining cells. They are formed by the docking of two hexameric hemichannels, one from each cell membrane. Small molecules and ions diffuse from one cell to a neighboring cell via the central pore. This chain is Gap junction beta-2 protein (GJB2), found in Macaca mulatta (Rhesus macaque).